The chain runs to 108 residues: uncharacterized protein (108 aa).

A disordered region spans residues 81–108 (TNHHQQQQNHQNQQQQQQQPNGIFENNI). Positions 83–99 (HHQQQQNHQNQQQQQQQ) are enriched in low complexity.

This is an uncharacterized protein from Dictyostelium discoideum (Social amoeba).